Reading from the N-terminus, the 128-residue chain is Small ribosomal subunit protein uS11 (128 aa).

Belongs to the universal ribosomal protein uS11 family. In terms of assembly, part of the 30S ribosomal subunit. Interacts with proteins S7 and S18. Binds to IF-3.

Located on the platform of the 30S subunit, it bridges several disparate RNA helices of the 16S rRNA. Forms part of the Shine-Dalgarno cleft in the 70S ribosome. This Phytoplasma australiense protein is Small ribosomal subunit protein uS11.